The sequence spans 794 residues: Glutamine--tRNA ligase (794 aa).

The disordered stretch occupies residues 192-217; the sequence is DNEKPKKKKEKPAKVEDKAAPVATSE. The 'HIGH' region motif lies at 277 to 287; the sequence is PEPNGYLHIGH. ATP contacts are provided by residues 278–280 and 284–290; these read EPN and HIGHAKA. Residues Asp310 and Tyr450 each contribute to the L-glutamine site. Residues Thr469, 498 to 499, and 506 to 508 each bind ATP; these read RL and MSK. The 'KMSKS' region signature appears at 505 to 509; that stretch reads VMSKR.

This sequence belongs to the class-I aminoacyl-tRNA synthetase family.

It catalyses the reaction tRNA(Gln) + L-glutamine + ATP = L-glutaminyl-tRNA(Gln) + AMP + diphosphate. The sequence is that of Glutamine--tRNA ligase from Lupinus luteus (European yellow lupine).